The chain runs to 64 residues: Fatty acid synthase (64 aa).

The 64-residue stretch at 1-64 (AEGEGQRDLL…VLSMREVRQL (64 aa)) folds into the Carrier domain. At S38 the chain carries O-(pantetheine 4'-phosphoryl)serine; alternate. A Phosphoserine; alternate modification is found at S38.

As to quaternary structure, homodimer which is arranged in a head to tail fashion. Interacts with CEACAM1; this interaction is insulin and phosphorylation-dependent; reduces fatty-acid synthase activity.

The protein localises to the cytoplasm. It is found in the melanosome. The catalysed reaction is acetyl-CoA + n malonyl-CoA + 2n NADPH + 2n H(+) = a long-chain fatty acid + (n+1) CoA + n CO2 + 2n NADP(+).. In terms of biological role, fatty acid synthetase catalyzes the formation of long-chain fatty acids from acetyl-CoA, malonyl-CoA and NADPH. This multifunctional protein has 7 catalytic activities as an acyl carrier protein. This is Fatty acid synthase (FASN) from Oryctolagus cuniculus (Rabbit).